Reading from the N-terminus, the 71-residue chain is Protein PSY3 (71 aa).

Residues 1–25 (MGYSSSSRIGLCLFLFFTFALLSSA) form the signal peptide. A propeptide spanning residues 26–49 (RISLSFSENEMTVVPERSLMVSTN) is cleaved from the precursor. The interval 47-71 (STNDYSDPTANGRHDPPRGGRGRRR) is disordered. A Sulfotyrosine modification is found at Tyr51. Residue Pro63 is modified to 4-hydroxyproline. Pro63 is a glycosylation site (O-linked (Ara...) hydroxyproline). Positions 66 to 71 (GRGRRR) are excised as a propeptide.

The protein belongs to the sulfated-peptide plant hormone family. In terms of processing, the sulfation and the glycosylation are required for full activity.

The protein localises to the secreted. In terms of biological role, promotes cellular proliferation and expansion. The sequence is that of Protein PSY3 (PSY3) from Arabidopsis thaliana (Mouse-ear cress).